We begin with the raw amino-acid sequence, 408 residues long: Neutral cholesterol ester hydrolase 1 (408 aa).

Over 1–4 the chain is Cytoplasmic; it reads MRSS. A helical; Signal-anchor for type II membrane protein membrane pass occupies residues 5–25; sequence CVLLTALVALAAYYVYIPLPG. The Lumenal portion of the chain corresponds to 26-408; the sequence is SVSDPWKLML…SYIKWLDQNL (383 aa). Residues 113–115 carry the Involved in the stabilization of the negatively charged intermediate by the formation of the oxyanion hole motif; the sequence is HGG. Serine 191 is a catalytic residue. Asparagine 270 and asparagine 287 each carry an N-linked (GlcNAc...) asparagine glycan. Residues aspartate 348 and histidine 378 contribute to the active site. Residue asparagine 389 is glycosylated (N-linked (GlcNAc...) asparagine).

Belongs to the 'GDXG' lipolytic enzyme family. N-glycosylated.

It is found in the cell membrane. Its subcellular location is the microsome. The catalysed reaction is a 1-O-alkyl-2-acetyl-sn-glycerol + H2O = a 1-O-alkyl-sn-glycerol + acetate + H(+). It catalyses the reaction 1-O-hexadecyl-2-acetyl-sn-glycerol + H2O = 1-O-hexadecyl-sn-glycerol + acetate + H(+). The enzyme catalyses a cholesterol ester + H2O = cholesterol + a fatty acid + H(+). It carries out the reaction cholesteryl (9Z-octadecenoate) + H2O = cholesterol + (9Z)-octadecenoate + H(+). In terms of biological role, hydrolyzes 2-acetyl monoalkylglycerol ether (1-O-alkyl-2-acetyl-sn-glycerol), the penultimate precursor of the pathway for de novo synthesis of platelet-activating factor. May be responsible for the hydrolysis of cholesterol esters (such as cholesteryl (9Z-octadecenoate)) in macrophages. Also involved in organ detoxification by hydrolyzing exogenous organophosphorus compounds. This Pongo abelii (Sumatran orangutan) protein is Neutral cholesterol ester hydrolase 1 (NCEH1).